The primary structure comprises 94 residues: DASH complex subunit dad2 (94 aa).

Residues 18 to 38 (KLRDSSNDMVQQIETLAAKLE) are a coiled coil. The interval 72–94 (VRIPPSTSNTNASATEQGDVEEV) is disordered. Residues 76–87 (PSTSNTNASATE) are compositionally biased toward polar residues.

The protein belongs to the DASH complex DAD2 family. Component of the DASH complex consisting of ask1, dad1, dad2, dad3, dad4, dam1, duo1, dad5, spc19 and spc34, with a stoichiometry of one copy of each subunit per complex. Multiple DASH complexes oligomerize to form a ring that encircles spindle microtubules and organizes the rod-like NDC80 complexes of the outer kinetochore. DASH complex oligomerization strengthens microtubule attachments. On cytoplasmic microtubules, DASH complexes appear to form patches instead of rings.

Its subcellular location is the nucleus. It is found in the cytoplasm. The protein resides in the cytoskeleton. The protein localises to the spindle. It localises to the chromosome. Its subcellular location is the centromere. It is found in the kinetochore. Component of the DASH complex that connects microtubules with kinetochores and couples microtubule depolymerisation to chromosome movement; it is involved in retrieving kinetochores to the spindle poles before their re-orientation on the spindle in early mitosis and allows microtubule depolymerization to pull chromosomes apart and resist detachment during anaphase. Kinetochores, consisting of a centromere-associated inner segment and a microtubule-contacting outer segment, play a crucial role in chromosome segregation by mediating the physical connection between centromeric DNA and microtubules. Kinetochores also serve as an input point for the spindle assembly checkpoint, which delays anaphase until all chromosomes have bioriented on the mitotic spindle. The DASH complex mediates bipolar kinetochore-microtubule attachments and facilitates the formation of additional interactions between outer kinetochore components and spindle microtubules. During chromosome movement along the microtubule, it is required both for the sliding of kinetochores along the lateral side of the microtubule and also for microtubule end-on pulling on the kinetochore. Modulates cytoplasmic microtubule dynamics by tracking the plus-end of shortening microtubules and slowing their depolymerization. This chain is DASH complex subunit dad2, found in Schizosaccharomyces pombe (strain 972 / ATCC 24843) (Fission yeast).